The following is a 368-amino-acid chain: Proline-rich protein 5-like (368 aa).

Ser28 is modified (phosphoserine). The disordered stretch occupies residues 327–368 (PSFPPPHRQCSSEPNITDNPDGLEEGARGSQEGSELNCASLS). 2 stretches are compositionally biased toward polar residues: residues 335–344 (QCSSEPNITD) and 357–368 (QEGSELNCASLS).

It belongs to the PROTOR family. In terms of assembly, interacts with the mammalian target of rapamycin complex 2 (mTORC2) which contains MTOR, MLST8, PRR5, RICTOR, MAPKAP1 and DEPTOR. Interacts with RFFL. Interacts (via C-terminus) with ZFP36 (via C-terminus); this interaction may accelerate ZFP36-mediated mRNA decay during stress. Interacts with RICTOR. Ubiquitinated. Ubiquitination by RFFL promotes proteasomal degradation of PRR5L thereby modifying the substrate-specific activity of the mTORC2 complex. Ubiquitination by RFFL is stimulated by LPA/lysophosphatidic acid.

Functionally, associates with the mTORC2 complex that regulates cellular processes including survival and organization of the cytoskeleton. Regulates the activity of the mTORC2 complex in a substrate-specific manner preventing for instance the specific phosphorylation of PKCs and thereby controlling cell migration. Plays a role in the stimulation of ZFP36-mediated mRNA decay of several ZFP36-associated mRNAs, such as TNF-alpha and GM-CSF, in response to stress. Required for ZFP36 localization to cytoplasmic stress granule (SG) and P-body (PB) in response to stress. The chain is Proline-rich protein 5-like (PRR5L) from Homo sapiens (Human).